The chain runs to 399 residues: MIQEKHLTFTINLLVSLFFLTILIIPKGYNYAPIILSAIGLIYFIPLKKKLSFSSEDKKLIFSFLFYFFTFLLSIIINKDGIREIDNPSRLLLFIPLLLLFKNFPIKRKTILYAIPSSALITGCVALFQKFALGYEKPFPETMHIQMGNIAISLATFSIVITLHFFIKKQYKSTLFGFVAIILAIMTSALSGARGGWIGLPVVVGIILFLYKEFINKKLIITLIAIITIGLTALITSPKFGIEKRYNAAKSDIVSYLEKNNRNTSLGARFDMWENALIAIKEAPIFGHGSDGYDEFRHKQVKSKQMAKTTLNFGSLHNQYLESWVKRGLVGFIALILIILTPIFYFIKNLNTHNLETKCICILGIIHIVSHIFYFTSQSFLAHNSGNIFYFSAMLCFIV.

The next 10 helical transmembrane spans lie at 6–26 (HLTF…LIIP), 27–47 (KGYN…FIPL), 60–80 (LIFS…INKD), 111–131 (ILYA…FQKF), 147–167 (MGNI…HFFI), 173–193 (STLF…LSGA), 195–215 (GGWI…KEFI), 220–240 (IITL…SPKF), 328–348 (GLVG…YFIK), and 362–382 (ILGI…SFLA).

Its subcellular location is the cell membrane. This is an uncharacterized protein from Haemophilus influenzae (strain ATCC 51907 / DSM 11121 / KW20 / Rd).